We begin with the raw amino-acid sequence, 329 residues long: Ribosomal protein L11 methyltransferase (329 aa).

T177, G198, D220, and N264 together coordinate S-adenosyl-L-methionine.

The protein belongs to the methyltransferase superfamily. PrmA family.

It is found in the cytoplasm. The catalysed reaction is L-lysyl-[protein] + 3 S-adenosyl-L-methionine = N(6),N(6),N(6)-trimethyl-L-lysyl-[protein] + 3 S-adenosyl-L-homocysteine + 3 H(+). Methylates ribosomal protein L11. This is Ribosomal protein L11 methyltransferase from Helicobacter pylori (strain HPAG1).